The following is a 388-amino-acid chain: MAAGISLTKPNIGVYTNPNHDLWVADAKPTLEEVKSGSDLKPGQVTVEIRSTGICGSDVHFWHAGCIGPMIVTGDHILGHESAGVVIAVAPDVKTLKPGDRVAIEPNIICNKCEPCLTGRYNGCEAVEFLSTPPVDGLLRRYVNHPAIWCHKIGDMSFEDGALLEPLSVALAGMDRAGVRLGDPVLVAGAGPIGLVTLLCVRAAGATPIVITDIDEGRLRFAKELVPEVRTYRVQTGLSAEENAAGILDALNDGNGSAPDAIRPRVAMECTGVESSVASAIWSVKFGGKVFVIGVGKNEMKVPFMRLSTWEIDLQYQYRYCNTWPKAIRLVKNGVINLKKLVTHRFPLEDAVKAFETAANPKTGAIKVQIMSSEEDIKAASGVNGASN.

Residues cysteine 55, histidine 80, glutamate 81, cysteine 110, cysteine 113, cysteine 116, cysteine 124, and glutamate 165 each contribute to the Zn(2+) site. NAD(+) is bound by residues 192 to 193, aspartate 213, arginine 218, isoleucine 293, and 317 to 319; these read PI and QYR.

It belongs to the zinc-containing alcohol dehydrogenase family. Homotetramer. Zn(2+) serves as cofactor.

The catalysed reaction is L-arabinitol + NAD(+) = L-xylulose + NADH + H(+). The protein operates within carbohydrate degradation; L-arabinose degradation via L-arabinitol; D-xylulose 5-phosphate from L-arabinose (fungal route): step 2/5. In terms of biological role, catalyzes the NAD-dependent oxidation of L-arabinitol to L-xylulose in the fungal L-arabinose catabolic pathway. L-arabinose catabolism is important for using plant material as a carbon source. NADP cannot act as a cosubstrate. The polypeptide is L-arabinitol 4-dehydrogenase (lad) (Talaromyces emersonii (Thermophilic fungus)).